A 176-amino-acid polypeptide reads, in one-letter code: Immunity factor for TNT homolog (176 aa).

Interacts with the tuberculosis necrotizing toxin (TNT) homolog, the C-terminal domain of the outer membrane channel protein CpnT.

Functionally, antitoxin for tuberculosis necrotizing toxin (TNT) homolog. Acts by binding directly to TNT, which inhibits NAD(+) glycohydrolase activity of TNT and protects M.bovis from self-poisoning. The sequence is that of Immunity factor for TNT homolog from Mycobacterium bovis (strain BCG / Pasteur 1173P2).